Here is a 78-residue protein sequence, read N- to C-terminus: D-alanyl carrier protein (78 aa).

Positions 1 to 78 constitute a Carrier domain; sequence MEFREQVLNL…KIVEALEELR (78 aa). Ser36 is subject to O-(pantetheine 4'-phosphoryl)serine.

Belongs to the DltC family. 4'-phosphopantetheine is transferred from CoA to a specific serine of apo-DCP.

It localises to the cytoplasm. It functions in the pathway cell wall biogenesis; lipoteichoic acid biosynthesis. Functionally, carrier protein involved in the D-alanylation of lipoteichoic acid (LTA). The loading of thioester-linked D-alanine onto DltC is catalyzed by D-alanine--D-alanyl carrier protein ligase DltA. The DltC-carried D-alanyl group is further transferred to cell membrane phosphatidylglycerol (PG) by forming an ester bond, probably catalyzed by DltD. D-alanylation of LTA plays an important role in modulating the properties of the cell wall in Gram-positive bacteria, influencing the net charge of the cell wall. The sequence is that of D-alanyl carrier protein from Staphylococcus aureus (strain Mu50 / ATCC 700699).